A 77-amino-acid chain; its full sequence is Acyl carrier protein (77 aa).

Residues 1–76 (MENFDKVKDI…DAVNFINNLE (76 aa)) enclose the Carrier domain. O-(pantetheine 4'-phosphoryl)serine is present on Ser36.

This sequence belongs to the acyl carrier protein (ACP) family. 4'-phosphopantetheine is transferred from CoA to a specific serine of apo-ACP by AcpS. This modification is essential for activity because fatty acids are bound in thioester linkage to the sulfhydryl of the prosthetic group.

The protein localises to the cytoplasm. It functions in the pathway lipid metabolism; fatty acid biosynthesis. Its function is as follows. Carrier of the growing fatty acid chain in fatty acid biosynthesis. This is Acyl carrier protein from Staphylococcus carnosus (strain TM300).